We begin with the raw amino-acid sequence, 428 residues long: D-amino acid dehydrogenase (428 aa).

V3–Y17 lines the FAD pocket.

This sequence belongs to the DadA oxidoreductase family. It depends on FAD as a cofactor.

It carries out the reaction a D-alpha-amino acid + A + H2O = a 2-oxocarboxylate + AH2 + NH4(+). Its pathway is amino-acid degradation; D-alanine degradation; NH(3) and pyruvate from D-alanine: step 1/1. Oxidative deamination of D-amino acids. This Paraburkholderia phytofirmans (strain DSM 17436 / LMG 22146 / PsJN) (Burkholderia phytofirmans) protein is D-amino acid dehydrogenase.